The chain runs to 347 residues: MSGEEEFYLFKNGSIGGPWDGPQYHIAPPWAFYLQTAFMGFVFMVGTPLNAIVLVVTIKYKKLRQPLNYILVNISFCGFLACIICIFTVFVSSSQGYFVFGKHVCAFEGFMGATAGLVTGWSLAFLAFERYIVICKPLGNFRFTAKHALVVVVATWVIGIGVAIPPFFGWSRYVPEGLQCSCGPDWYTVGTKYRSEYYTWFLFIFCFIVPLSLIIFSYSQLLSALRAVAAQQQESATTQKAEREVSRMVVVMVGSFCVCYVPYAALAMYMVNNREHGIDLRLVTIPAFFSKSSCVYNPIIYCFMNKQFRGCIMEMVCGKPMTDDSDMSSSAQRTEVSSVSSSQVSPS.

Over 1–37 (MSGEEEFYLFKNGSIGGPWDGPQYHIAPPWAFYLQTA) the chain is Extracellular. N-linked (GlcNAc...) asparagine glycosylation is present at N12. Residues 38-58 (FMGFVFMVGTPLNAIVLVVTI) form a helical membrane-spanning segment. Residues 59–69 (KYKKLRQPLNY) lie on the Cytoplasmic side of the membrane. A helical transmembrane segment spans residues 70–90 (ILVNISFCGFLACIICIFTVF). The Extracellular segment spans residues 91 to 106 (VSSSQGYFVFGKHVCA). Residues C105 and C182 are joined by a disulfide bond. The helical transmembrane segment at 107–127 (FEGFMGATAGLVTGWSLAFLA) threads the bilayer. The Cytoplasmic segment spans residues 128–147 (FERYIVICKPLGNFRFTAKH). Residues 148-168 (ALVVVVATWVIGIGVAIPPFF) traverse the membrane as a helical segment. Residues 169–197 (GWSRYVPEGLQCSCGPDWYTVGTKYRSEY) are Extracellular-facing. The chain crosses the membrane as a helical span at residues 198 to 218 (YTWFLFIFCFIVPLSLIIFSY). The Cytoplasmic portion of the chain corresponds to 219-247 (SQLLSALRAVAAQQQESATTQKAEREVSR). A helical membrane pass occupies residues 248–268 (MVVVMVGSFCVCYVPYAALAM). Residues 269–282 (YMVNNREHGIDLRL) lie on the Extracellular side of the membrane. Residues 283-303 (VTIPAFFSKSSCVYNPIIYCF) form a helical membrane-spanning segment. K291 is modified (N6-(retinylidene)lysine). The Cytoplasmic portion of the chain corresponds to 304 to 347 (MNKQFRGCIMEMVCGKPMTDDSDMSSSAQRTEVSSVSSSQVSPS). C317 carries S-palmitoyl cysteine lipidation. Positions 324-347 (DSDMSSSAQRTEVSSVSSSQVSPS) are disordered. Low complexity predominate over residues 328 to 347 (SSSAQRTEVSSVSSSQVSPS).

It belongs to the G-protein coupled receptor 1 family. Opsin subfamily. Phosphorylated on some or all of the serine and threonine residues present in the C-terminal region. Cone photoreceptor cells.

The protein resides in the membrane. Functionally, visual pigments are the light-absorbing molecules that mediate vision. They consist of an apoprotein, opsin, covalently linked to cis-retinal. In Melopsittacus undulatus (Budgerigar), this protein is Ultraviolet-sensitive opsin.